Consider the following 105-residue polypeptide: MEVSQFDNVSVVKKANLYFDGKCVSHTVLFSDGTRKTLGVIFPATLTFNTGAPEIMEINAGVCRVRLAGSEAWQTYGAGQQFDVPGNSSFDIEVQETLDYVCHFG.

Belongs to the nucleoside phosphorylase PpnP family.

It carries out the reaction a purine D-ribonucleoside + phosphate = a purine nucleobase + alpha-D-ribose 1-phosphate. The catalysed reaction is adenosine + phosphate = alpha-D-ribose 1-phosphate + adenine. It catalyses the reaction cytidine + phosphate = cytosine + alpha-D-ribose 1-phosphate. The enzyme catalyses guanosine + phosphate = alpha-D-ribose 1-phosphate + guanine. It carries out the reaction inosine + phosphate = alpha-D-ribose 1-phosphate + hypoxanthine. The catalysed reaction is thymidine + phosphate = 2-deoxy-alpha-D-ribose 1-phosphate + thymine. It catalyses the reaction uridine + phosphate = alpha-D-ribose 1-phosphate + uracil. The enzyme catalyses xanthosine + phosphate = alpha-D-ribose 1-phosphate + xanthine. In terms of biological role, catalyzes the phosphorolysis of diverse nucleosides, yielding D-ribose 1-phosphate and the respective free bases. Can use uridine, adenosine, guanosine, cytidine, thymidine, inosine and xanthosine as substrates. Also catalyzes the reverse reactions. The sequence is that of Pyrimidine/purine nucleoside phosphorylase from Cupriavidus pinatubonensis (strain JMP 134 / LMG 1197) (Cupriavidus necator (strain JMP 134)).